A 280-amino-acid chain; its full sequence is Phosphonates import ATP-binding protein PhnC (280 aa).

The region spanning 2–245 is the ABC transporter domain; that stretch reads FELKNVTRRF…AVKEIYGTDK (244 aa). ATP is bound at residue 34 to 41; the sequence is GRSGAGKS. The tract at residues 257-280 is disordered; the sequence is TSLESKRRAEDVSSGRVAKAAAVH. The segment covering 260-269 has biased composition (basic and acidic residues); that stretch reads ESKRRAEDVS.

The protein belongs to the ABC transporter superfamily. Phosphonates importer (TC 3.A.1.9.1) family. The complex is composed of two ATP-binding proteins (PhnC), two transmembrane proteins (PhnE) and a solute-binding protein (PhnD).

Its subcellular location is the cell inner membrane. It carries out the reaction phosphonate(out) + ATP + H2O = phosphonate(in) + ADP + phosphate + H(+). Functionally, part of the ABC transporter complex PhnCDE involved in phosphonates import. Responsible for energy coupling to the transport system. This is Phosphonates import ATP-binding protein PhnC from Rhizobium johnstonii (strain DSM 114642 / LMG 32736 / 3841) (Rhizobium leguminosarum bv. viciae).